The sequence spans 39 residues: Gonadal protein gdl-ORF39 (39 aa).

In bundles of maturing sperm of larval, pupal and adult males.

In Drosophila melanogaster (Fruit fly), this protein is Gonadal protein gdl-ORF39 (gdl-ORF39).